The primary structure comprises 682 residues: 1,4-alpha-glucan-branching enzyme (682 aa).

(1,4-alpha-D-glucosyl)n-binding residues include Trp88 and Lys124. Catalysis depends on Asp342, which acts as the Nucleophile. Glu397 functions as the Proton donor in the catalytic mechanism.

The protein belongs to the glycosyl hydrolase 13 family. GlgB subfamily.

The protein localises to the cytoplasm. It catalyses the reaction Transfers a segment of a (1-&gt;4)-alpha-D-glucan chain to a primary hydroxy group in a similar glucan chain.. The protein operates within glycan biosynthesis; glycogen biosynthesis. Functionally, glycogen-branching enzyme participates in the glycogen biosynthetic process along with glycogenin and glycogen synthase. Generates alpha-1,6-glucosidic branches from alpha-1,4-linked glucose chains, to increase solubility of the glycogen polymer. In Cryptococcus neoformans var. neoformans serotype D (strain B-3501A) (Filobasidiella neoformans), this protein is 1,4-alpha-glucan-branching enzyme (GLC3).